Reading from the N-terminus, the 51-residue chain is uncharacterized protein (51 aa).

The disordered stretch occupies residues 1 to 51 (MKRKAEVNEAIKNNNTPTESMDPNSYKTQYHDDPNFRGANRNSKQGQQGGM). Composition is skewed to polar residues over residues 11–28 (IKNN…SYKT) and 40–51 (NRNSKQGQQGGM).

This is an uncharacterized protein from Bacillus subtilis (strain 168).